A 338-amino-acid polypeptide reads, in one-letter code: 1-aminocyclopropane-1-carboxylate deaminase (338 aa).

Lysine 51 is modified (N6-(pyridoxal phosphate)lysine). Serine 78 serves as the catalytic Nucleophile.

Belongs to the ACC deaminase/D-cysteine desulfhydrase family. As to quaternary structure, homotrimer. It depends on pyridoxal 5'-phosphate as a cofactor.

The catalysed reaction is 1-aminocyclopropane-1-carboxylate + H2O = 2-oxobutanoate + NH4(+). Catalyzes a cyclopropane ring-opening reaction, the irreversible conversion of 1-aminocyclopropane-1-carboxylate (ACC) to ammonia and alpha-ketobutyrate. Allows growth on ACC as a nitrogen source. This Paracidovorax citrulli (strain AAC00-1) (Acidovorax citrulli) protein is 1-aminocyclopropane-1-carboxylate deaminase.